Reading from the N-terminus, the 298-residue chain is Protein REVEILLE 8 (298 aa).

Positions Met1–Glu44 are disordered. The 55-residue stretch at Thr38–Gln92 folds into the HTH myb-type domain. The H-T-H motif DNA-binding region spans Trp65 to Phe88. Positions Thr96–Met123 are disordered.

The protein localises to the nucleus. In terms of biological role, transcriptional activator of evening element (EE)-containing clock-controlled genes. Forms a negative feedback loop with APRR5. Regulates the pattern of histone H3 acetylation of the TOC1 promoter. RVE4, RVE6 and RVE8 are components of the circadian system acting synergistically to regulate flowering time, redundantly to regulate leaf growth, and antagonistically to regulate hypocotyl elongation; their action seems independent of ZTL and HY5. In Arabidopsis thaliana (Mouse-ear cress), this protein is Protein REVEILLE 8.